The primary structure comprises 59 residues: Large ribosomal subunit protein bL32 (59 aa).

Residues M1 to R16 show a composition bias toward basic residues. Positions M1–D20 are disordered.

Belongs to the bacterial ribosomal protein bL32 family.

The chain is Large ribosomal subunit protein bL32 from Erythrobacter litoralis (strain HTCC2594).